A 1615-amino-acid polypeptide reads, in one-letter code: Low-density lipoprotein receptor-related protein 5 (1615 aa).

Positions 1 to 31 are cleaved as a signal peptide; the sequence is MEAAPPGPPWPLLLLLLLLLALCGCPAPAAA. Positions 32–288 are beta-propeller 1; that stretch reads SPLLLFANRR…YSPMDIQVLS (257 aa). At 32 to 1384 the chain is on the extracellular side; the sequence is SPLLLFANRR…PPSDDSPAHS (1353 aa). 5 LDL-receptor class B repeats span residues 75–119, 120–162, 163–206, 207–247, and 248–290; these read GAVY…DWVG, KKLY…DPAH, GYMY…DLEE, QKLY…TLSG, and DTLY…LSQE. The YWTD 1 repeat unit spans residues 78–81; sequence YWTD. Asn-93 carries N-linked (GlcNAc...) asparagine glycosylation. The YWTD 2 repeat unit spans residues 123–126; it reads YWTD. Asn-138 carries N-linked (GlcNAc...) asparagine glycosylation. A YWTD 3 repeat occupies 166–169; the sequence is YWTD. The stretch at 251–254 is one YWTD 4 repeat; it reads YWTD. In terms of domain architecture, EGF-like 1 spans 295-337; the sequence is FHTRCEEDNGGCSHLCLLSPSEPFYTCACPTGVQLQDNGRTCK. Disulfide bonds link Cys-299/Cys-310, Cys-306/Cys-321, and Cys-323/Cys-336. Positions 341–602 are beta-propeller 2; the sequence is EEVLLLARRT…AVNVAKVVGT (262 aa). LDL-receptor class B repeat units follow at residues 385 to 427, 428 to 470, 471 to 514, 515 to 557, and 558 to 600; these read GYVY…DWVA, RNLY…HPVM, GLMY…DLQE, GKLY…LGDF, and IYWT…AKVV. 2 YWTD repeats span residues 388–391 and 431–434; these read YWTD. N-linked (GlcNAc...) asparagine glycosylation is present at Asn-446. Residues 474 to 477 form a YWTD 7 repeat; that stretch reads YWTD. Asn-499 carries an N-linked (GlcNAc...) asparagine glycan. One copy of the YWTD 8 repeat lies at 559–562; it reads YWTD. Residues 601 to 641 form the EGF-like 2 domain; it reads GTNPCADRNGGCSHLCFFTPHATRCGCPIGLELLSDMKTCI. Intrachain disulfides connect Cys-605–Cys-616, Cys-612–Cys-625, and Cys-627–Cys-640. Positions 644-903 are beta-propeller 3; sequence EAFLVFTSRA…VFHSSRQDGL (260 aa). 5 LDL-receptor class B repeats span residues 687–729, 730–772, 773–815, 816–855, and 856–898; these read NHIY…DWMG, KNLY…DPTK, GYIY…DYAD, QRLYWTDLDTNMIESSNMLGQERVVIADDLPHPFGLTQYS, and DYIY…FHSS. The stretch at 690-693 is one YWTD 9 repeat; the sequence is YWTD. Asn-705 carries N-linked (GlcNAc...) asparagine glycosylation. 2 YWTD repeats span residues 819-822 and 859-862; these read YWTD. Asn-878 carries N-linked (GlcNAc...) asparagine glycosylation. In terms of domain architecture, EGF-like 3 spans 902-942; the sequence is GLNDCMHNNGQCGQLCLAIPGGHRCGCASHYTLDPSSRNCS. Disulfide bonds link Cys-906–Cys-917, Cys-913–Cys-926, and Cys-928–Cys-941. The tract at residues 945–1212 is beta-propeller 4; it reads TTFLLFSQKS…AVEEVSLEEF (268 aa). LDL-receptor class B repeat units lie at residues 989 to 1035, 1036 to 1078, 1079 to 1123, 1124 to 1164, and 1165 to 1207; these read KFIY…DIYS, RTLF…NAER, GYLY…DNTL, GKLF…TILG, and KHLY…VEEV. The EGF-like 4 domain occupies 1213–1254; sequence SAHPCARDNGGCSHICIAKGDGTPRCSCPVHLVLLQNLLTCG. 12 cysteine pairs are disulfide-bonded: Cys-1217-Cys-1228, Cys-1224-Cys-1238, Cys-1240-Cys-1253, Cys-1259-Cys-1273, Cys-1266-Cys-1286, Cys-1280-Cys-1295, Cys-1298-Cys-1310, Cys-1305-Cys-1323, Cys-1317-Cys-1332, Cys-1336-Cys-1348, Cys-1343-Cys-1361, and Cys-1355-Cys-1370. LDL-receptor class A domains are found at residues 1258–1296, 1297–1333, and 1335–1371; these read TCSPDQFACATGEIDCIPGAWRCDGFPECDDQSDEEGCP, VCSAAQFPCARGQCVDLRLRCDGEADCQDRSDEADCD, and ICLPNQFRCASGQCVLIKQQCDSFPDCIDGSDELMCE. A helical membrane pass occupies residues 1385-1407; the sequence is SAIGPVIGIILSLFVMGGVYFVC. Topologically, residues 1408-1615 are cytoplasmic; it reads QRVVCQRYAG…PPPSPCTDSS (208 aa). The interval 1475–1501 is disordered; that stretch reads RNHVTGASSSSSSSTKATLYPPILNPP. A PPPSP motif A motif is present at residues 1500-1506; it reads PPPSPAT. The PPPSP motif B motif lies at 1538-1545; sequence PPTTPCST. Residues 1568–1615 are disordered; sequence SDSDPYPPPPTPHSQYLSAEDSCPPSPATERSYFHLFPPPPSPCTDSS. The PPPSP motif C motif lies at 1574–1581; the sequence is PPPPTPHS. Residues 1591 to 1596 carry the PPPSP motif D motif; it reads PPSPAT. Residues 1604 to 1615 show a composition bias toward pro residues; it reads FPPPPSPCTDSS. The PPPSP motif E signature appears at 1605-1612; sequence PPPPSPCT.

Belongs to the LDLR family. In terms of assembly, homodimer; disulfide-linked. Forms phosphorylated oligomer aggregates on Wnt-signaling. Component of a Wnt-signaling complex that contains a WNT protein, a FZD protein and LRP5 or LRP6. Interacts with FZD8; the interaction is formed on WNT-binding and signaling. Interacts (via the phosphorylated PPPSP motif domains) with AXIN1; the interaction prevents inhibition of beta-catenin phosphorylation and signaling and is enhanced in the presence of GSK3B and WNT1 or WNT3A. Interacts (via beta-propeller regions 3 and 4) with DKK1; the interaction, enhanced by MESD and/or KREMEN, inhibits beta-catenin signaling by preventing GSK3-mediated phosphorylation of the PPPSP motifs and subsequent, AXIN1 binding. Interacts with MESD; the interaction prevents the formation of LRP5 aggregates, targets LRP5 to the plasma membrane and, when complexed with KREMEN2, increases DKK1 binding. Interacts with CSNK1E. Interacts with SOST; the interaction antagonizes canonical Wnt signaling. Interacts with APCDD1. Interacts with CAPRIN2. Post-translationally, phosphorylation of cytoplasmic PPPSP motifs regulates the signal transduction of the Wnt signaling pathway through acting as a docking site for AXIN1. As to expression, widely expressed, with the highest level of expression in the liver and in aorta.

The protein localises to the membrane. The protein resides in the endoplasmic reticulum. Functionally, acts as a coreceptor with members of the frizzled family of seven-transmembrane spanning receptors to transduce signal by Wnt proteins. Activates the canonical Wnt signaling pathway that controls cell fate determination and self-renewal during embryonic development and adult tissue regeneration. In particular, may play an important role in the development of the posterior patterning of the epiblast during gastrulation. During bone development, regulates osteoblast proliferation and differentiation thus determining bone mass. Mechanistically, the formation of the signaling complex between Wnt ligand, frizzled receptor and LRP5 coreceptor promotes the recruitment of AXIN1 to LRP5, stabilizing beta-catenin/CTNNB1 and activating TCF/LEF-mediated transcriptional programs. Acts as a coreceptor for non-Wnt proteins, such as norrin/NDP. Binding of norrin/NDP to frizzled 4/FZD4-LRP5 receptor complex triggers beta-catenin/CTNNB1-dependent signaling known to be required for retinal vascular development. Plays a role in controlling postnatal vascular regression in retina via macrophage-induced endothelial cell apoptosis. In Homo sapiens (Human), this protein is Low-density lipoprotein receptor-related protein 5.